A 109-amino-acid chain; its full sequence is Nucleoid-associated protein YbaB (109 aa).

This sequence belongs to the YbaB/EbfC family. As to quaternary structure, homodimer.

The protein resides in the cytoplasm. It localises to the nucleoid. Its function is as follows. Binds to DNA and alters its conformation. May be involved in regulation of gene expression, nucleoid organization and DNA protection. The sequence is that of Nucleoid-associated protein YbaB from Escherichia coli O127:H6 (strain E2348/69 / EPEC).